The sequence spans 265 residues: Hydroxyethylthiazole kinase (265 aa).

M43 contacts substrate. ATP contacts are provided by K118 and T165. Position 192 (G192) interacts with substrate.

This sequence belongs to the Thz kinase family. It depends on Mg(2+) as a cofactor.

The catalysed reaction is 5-(2-hydroxyethyl)-4-methylthiazole + ATP = 4-methyl-5-(2-phosphooxyethyl)-thiazole + ADP + H(+). It participates in cofactor biosynthesis; thiamine diphosphate biosynthesis; 4-methyl-5-(2-phosphoethyl)-thiazole from 5-(2-hydroxyethyl)-4-methylthiazole: step 1/1. In terms of biological role, catalyzes the phosphorylation of the hydroxyl group of 4-methyl-5-beta-hydroxyethylthiazole (THZ). The chain is Hydroxyethylthiazole kinase from Pyrococcus horikoshii (strain ATCC 700860 / DSM 12428 / JCM 9974 / NBRC 100139 / OT-3).